We begin with the raw amino-acid sequence, 283 residues long: DNA repair protein RecO (283 aa).

This sequence belongs to the RecO family.

Its function is as follows. Involved in DNA repair and RecF pathway recombination. The polypeptide is DNA repair protein RecO (Gloeothece citriformis (strain PCC 7424) (Cyanothece sp. (strain PCC 7424))).